Consider the following 580-residue polypeptide: Glutamine--tRNA ligase (580 aa).

The short motif at 41–51 (PEPNGYLHIGH) is the 'HIGH' region element. ATP contacts are provided by residues 42 to 44 (EPN) and 48 to 54 (HIGHAKA). D74 and Y218 together coordinate L-glutamine. Residues T237, 285–286 (RL), and 293–295 (MSK) contribute to the ATP site. The 'KMSKS' region signature appears at 292–296 (VMSKR).

Belongs to the class-I aminoacyl-tRNA synthetase family. Monomer.

The protein localises to the cytoplasm. It carries out the reaction tRNA(Gln) + L-glutamine + ATP = L-glutaminyl-tRNA(Gln) + AMP + diphosphate. The chain is Glutamine--tRNA ligase from Xylella fastidiosa (strain M12).